Reading from the N-terminus, the 54-residue chain is Large ribosomal subunit protein bL33A (54 aa).

The protein belongs to the bacterial ribosomal protein bL33 family.

The sequence is that of Large ribosomal subunit protein bL33A from Streptomyces griseus subsp. griseus (strain JCM 4626 / CBS 651.72 / NBRC 13350 / KCC S-0626 / ISP 5235).